Here is a 423-residue protein sequence, read N- to C-terminus: Serine--tRNA ligase (423 aa).

Residue 231 to 233 coordinates L-serine; that stretch reads TGE. 262–264 provides a ligand contact to ATP; it reads RSE. Position 285 (Glu-285) interacts with L-serine. 349 to 352 is an ATP binding site; the sequence is EISS. Ser-385 contacts L-serine.

Belongs to the class-II aminoacyl-tRNA synthetase family. Type-1 seryl-tRNA synthetase subfamily. In terms of assembly, homodimer. The tRNA molecule binds across the dimer.

It is found in the cytoplasm. It catalyses the reaction tRNA(Ser) + L-serine + ATP = L-seryl-tRNA(Ser) + AMP + diphosphate + H(+). The catalysed reaction is tRNA(Sec) + L-serine + ATP = L-seryl-tRNA(Sec) + AMP + diphosphate + H(+). It functions in the pathway aminoacyl-tRNA biosynthesis; selenocysteinyl-tRNA(Sec) biosynthesis; L-seryl-tRNA(Sec) from L-serine and tRNA(Sec): step 1/1. Its function is as follows. Catalyzes the attachment of serine to tRNA(Ser). Is also able to aminoacylate tRNA(Sec) with serine, to form the misacylated tRNA L-seryl-tRNA(Sec), which will be further converted into selenocysteinyl-tRNA(Sec). This Coxiella burnetii (strain CbuK_Q154) (Coxiella burnetii (strain Q154)) protein is Serine--tRNA ligase.